The following is a 211-amino-acid chain: Large ribosomal subunit protein uL3 (211 aa).

A disordered region spans residues 125-148; it reads GPASHGSKKWHRRPGSIGQRKTPG.

It belongs to the universal ribosomal protein uL3 family. Part of the 50S ribosomal subunit. Forms a cluster with proteins L14 and L19. Also contacts proteins L13 and L17.

Functionally, one of the primary rRNA binding proteins, it binds directly near the 3'-end of the 23S rRNA, where it nucleates assembly of the 50S subunit. This Deinococcus radiodurans (strain ATCC 13939 / DSM 20539 / JCM 16871 / CCUG 27074 / LMG 4051 / NBRC 15346 / NCIMB 9279 / VKM B-1422 / R1) protein is Large ribosomal subunit protein uL3 (rplC).